The sequence spans 283 residues: Light-independent protochlorophyllide reductase iron-sulfur ATP-binding protein (283 aa).

Residues 15 to 20 (GIGKST) and K44 each bind ATP. Residue S19 coordinates Mg(2+). Residues C100 and C134 each contribute to the [4Fe-4S] cluster site. 185-186 (NR) contacts ATP.

Belongs to the NifH/BchL/ChlL family. In terms of assembly, homodimer. Protochlorophyllide reductase is composed of three subunits; ChlL, ChlN and ChlB. It depends on [4Fe-4S] cluster as a cofactor.

The enzyme catalyses chlorophyllide a + oxidized 2[4Fe-4S]-[ferredoxin] + 2 ADP + 2 phosphate = protochlorophyllide a + reduced 2[4Fe-4S]-[ferredoxin] + 2 ATP + 2 H2O. It functions in the pathway porphyrin-containing compound metabolism; chlorophyll biosynthesis (light-independent). In terms of biological role, component of the dark-operative protochlorophyllide reductase (DPOR) that uses Mg-ATP and reduced ferredoxin to reduce ring D of protochlorophyllide (Pchlide) to form chlorophyllide a (Chlide). This reaction is light-independent. The L component serves as a unique electron donor to the NB-component of the complex, and binds Mg-ATP. In Synechococcus sp. (strain JA-3-3Ab) (Cyanobacteria bacterium Yellowstone A-Prime), this protein is Light-independent protochlorophyllide reductase iron-sulfur ATP-binding protein.